Here is an 83-residue protein sequence, read N- to C-terminus: Cell division topological specificity factor (83 aa).

Belongs to the MinE family.

In terms of biological role, prevents the cell division inhibition by proteins MinC and MinD at internal division sites while permitting inhibition at polar sites. This ensures cell division at the proper site by restricting the formation of a division septum at the midpoint of the long axis of the cell. This Deinococcus deserti (strain DSM 17065 / CIP 109153 / LMG 22923 / VCD115) protein is Cell division topological specificity factor.